We begin with the raw amino-acid sequence, 130 residues long: Small ribosomal subunit protein uS9 (130 aa).

The protein belongs to the universal ribosomal protein uS9 family.

The protein is Small ribosomal subunit protein uS9 of Onion yellows phytoplasma (strain OY-M).